A 437-amino-acid polypeptide reads, in one-letter code: MEVKVLSSKLVKPAYNGGVAAAPDVEYIPLSIFDKVTYKMQMAIIYAFPPPAPSTAAIEKGLAAVLAQYRAFAGQLGESPDGEAAVVLNDRGARLVEAAVDADLVDMAPAKPTPELLRLHPDLEGELQEVVLLQLTRFRCGSLAVGFTSNHVVADGHATSNFLVAWGRATRGLPMGAPPVHHHAALFKPRPSPHVEHDHRNREYYLPAAGDDSHGHGDGGAADNIVIHKAHFTKDFIAGLRAAASEGRGRPFSRFETILAHLWRTMTRARGLSPDEASTIRLSVDGRHRLGAPAEYFGNLVLWAFPRATVGDLLTRPLKHAAQVIHDEVARVDGAYFRSFLDFALSGAGGDKEGLAPSAVLKDVLCPNAEVDSWLTFPFYELDFGTGSPTYFMPSYFPTEGMLFLVPSYLGDGSVDAFVPVFNHNLEAFKECCYSME.

Residues His151 and Asp383 each act as proton acceptor in the active site.

Belongs to the plant acyltransferase family. In terms of tissue distribution, highly expressed in roots. Expressed at low levels in shoots and flowers.

Hydroxycinnamoyl transferase that catalyzes the transfer of an acyl from p-coumaryol-CoA to putrescine, to produce coumaroyl putrescine. Can use feruloyl-CoA and caffeoyl-CoA as acyl donors. This chain is Putrescine hydroxycinnamoyltransferase 3, found in Oryza sativa subsp. japonica (Rice).